The primary structure comprises 100 residues: Urease subunit gamma (100 aa).

This sequence belongs to the urease gamma subunit family. In terms of assembly, heterotrimer of UreA (gamma), UreB (beta) and UreC (alpha) subunits. Three heterotrimers associate to form the active enzyme.

It is found in the cytoplasm. It carries out the reaction urea + 2 H2O + H(+) = hydrogencarbonate + 2 NH4(+). Its pathway is nitrogen metabolism; urea degradation; CO(2) and NH(3) from urea (urease route): step 1/1. In Parasynechococcus marenigrum (strain WH8102), this protein is Urease subunit gamma.